Consider the following 274-residue polypeptide: 3-methyl-2-oxobutanoate hydroxymethyltransferase (274 aa).

Mg(2+)-binding residues include D44 and D83. 3-methyl-2-oxobutanoate contacts are provided by residues 44–45 (DS), D83, and K113. Residue E115 coordinates Mg(2+). The active-site Proton acceptor is E182.

This sequence belongs to the PanB family. As to quaternary structure, homodecamer; pentamer of dimers. Mg(2+) serves as cofactor.

It localises to the cytoplasm. The catalysed reaction is 3-methyl-2-oxobutanoate + (6R)-5,10-methylene-5,6,7,8-tetrahydrofolate + H2O = 2-dehydropantoate + (6S)-5,6,7,8-tetrahydrofolate. The protein operates within cofactor biosynthesis; (R)-pantothenate biosynthesis; (R)-pantoate from 3-methyl-2-oxobutanoate: step 1/2. In terms of biological role, catalyzes the reversible reaction in which hydroxymethyl group from 5,10-methylenetetrahydrofolate is transferred onto alpha-ketoisovalerate to form ketopantoate. In Campylobacter jejuni subsp. jejuni serotype O:23/36 (strain 81-176), this protein is 3-methyl-2-oxobutanoate hydroxymethyltransferase.